The sequence spans 91 residues: Essential MCU regulator, mitochondrial (91 aa).

A helical transmembrane segment spans residues 45–65 (VIPFGLLGVVLTVIPGLLIGA).

The protein belongs to the SMDT1/EMRE family.

It is found in the mitochondrion inner membrane. Essential regulatory subunit of the mitochondrial calcium uniporter (mcu) channel, a protein that mediates calcium uptake into mitochondria. This chain is Essential MCU regulator, mitochondrial, found in Aedes aegypti (Yellowfever mosquito).